A 150-amino-acid polypeptide reads, in one-letter code: UPF0756 membrane protein Dd703_1075 (150 aa).

4 consecutive transmembrane segments (helical) span residues 8–28, 51–71, 81–101, and 114–134; these read LLILLVLAVLGIVSHNMTITL, YGLSFGILVLTIGVLAPIASG, AFLNWKSLLAVIIGIAVSWLG, and VVAGLLVGTVIGVALLRGVPV.

This sequence belongs to the UPF0756 family.

Its subcellular location is the cell membrane. This chain is UPF0756 membrane protein Dd703_1075, found in Musicola paradisiaca (strain Ech703) (Dickeya paradisiaca).